The following is a 208-amino-acid chain: Interleukin-6 (208 aa).

The first 29 residues, 1–29 (MNSRFTSAFTPFAVSLGLLLVMTSAFPTP), serve as a signal peptide directing secretion. Asn-38 is a glycosylation site (N-linked (GlcNAc...) asparagine). A disulfide bond links Cys-72 and Cys-78. At Ser-81 the chain carries Phosphoserine. Residues Cys-101 and Cys-111 are joined by a disulfide bond.

This sequence belongs to the IL-6 superfamily. As to quaternary structure, component of a hexamer of two molecules each of IL6, IL6R and IL6ST; first binds to IL6R to associate with the signaling subunit IL6ST. Interacts with IL6R (via the N-terminal ectodomain); this interaction may be affected by IL6R-binding with SORL1, hence decreasing IL6 cis signaling. Interacts with SORL1 (via the N-terminal ectodomain); this interaction leads to IL6 internalization and lysosomal degradation. May form a trimeric complex with the soluble SORL1 ectodomain and soluble IL6R receptor; this interaction might stabilize circulating IL6, hence promoting IL6 trans signaling.

It localises to the secreted. Functionally, cytokine with a wide variety of biological functions in immunity, tissue regeneration, and metabolism. Binds to IL6R, then the complex associates to the signaling subunit IL6ST/gp130 to trigger the intracellular IL6-signaling pathway. The interaction with the membrane-bound IL6R and IL6ST stimulates 'classic signaling', whereas the binding of IL6 and soluble IL6R to IL6ST stimulates 'trans-signaling'. Alternatively, 'cluster signaling' occurs when membrane-bound IL6:IL6R complexes on transmitter cells activate IL6ST receptors on neighboring receiver cells. In terms of biological role, IL6 is a potent inducer of the acute phase response. Rapid production of IL6 contributes to host defense during infection and tissue injury, but excessive IL6 synthesis is involved in disease pathology. In the innate immune response, is synthesized by myeloid cells, such as macrophages and dendritic cells, upon recognition of pathogens through toll-like receptors (TLRs) at the site of infection or tissue injury. In the adaptive immune response, is required for the differentiation of B cells into immunoglobulin-secreting cells. Plays a major role in the differentiation of CD4(+) T cell subsets. Essential factor for the development of T follicular helper (Tfh) cells that are required for the induction of germinal-center formation. Required to drive naive CD4(+) T cells to the Th17 lineage. Also required for proliferation of myeloma cells and the survival of plasmablast cells. Its function is as follows. Acts as an essential factor in bone homeostasis and on vessels directly or indirectly by induction of VEGF, resulting in increased angiogenesis activity and vascular permeability. Induces, through 'trans-signaling' and synergistically with IL1B and TNF, the production of VEGF. Involved in metabolic controls, is discharged into the bloodstream after muscle contraction increasing lipolysis and improving insulin resistance. 'Trans-signaling' in central nervous system also regulates energy and glucose homeostasis. Mediates, through GLP-1, crosstalk between insulin-sensitive tissues, intestinal L cells and pancreatic islets to adapt to changes in insulin demand. Also acts as a myokine. Plays a protective role during liver injury, being required for maintenance of tissue regeneration. Also has a pivotal role in iron metabolism by regulating HAMP/hepcidin expression upon inflammation or bacterial infection. Through activation of IL6ST-YAP-NOTCH pathway, induces inflammation-induced epithelial regeneration. This chain is Interleukin-6 (IL6), found in Bubalus bubalis (Domestic water buffalo).